Here is a 302-residue protein sequence, read N- to C-terminus: Oxygen-dependent coproporphyrinogen-III oxidase (302 aa).

Ser94 is a binding site for substrate. A divalent metal cation-binding residues include His98 and His108. His108 serves as the catalytic Proton donor. 110 to 112 (NVR) contributes to the substrate binding site. Positions 147 and 177 each coordinate a divalent metal cation. An important for dimerization region spans residues 242–277 (YVEFNLVYDRGTLFGLQTGGRTESILMSMPPLVRWQ). Residue 260 to 262 (GGR) participates in substrate binding.

The protein belongs to the aerobic coproporphyrinogen-III oxidase family. In terms of assembly, homodimer. The cofactor is a divalent metal cation.

It is found in the cytoplasm. The enzyme catalyses coproporphyrinogen III + O2 + 2 H(+) = protoporphyrinogen IX + 2 CO2 + 2 H2O. It functions in the pathway porphyrin-containing compound metabolism; protoporphyrin-IX biosynthesis; protoporphyrinogen-IX from coproporphyrinogen-III (O2 route): step 1/1. Its function is as follows. Involved in the heme biosynthesis. Catalyzes the aerobic oxidative decarboxylation of propionate groups of rings A and B of coproporphyrinogen-III to yield the vinyl groups in protoporphyrinogen-IX. This chain is Oxygen-dependent coproporphyrinogen-III oxidase, found in Shewanella oneidensis (strain ATCC 700550 / JCM 31522 / CIP 106686 / LMG 19005 / NCIMB 14063 / MR-1).